Consider the following 388-residue polypeptide: Na(+)/H(+) antiporter NhaA (388 aa).

Topologically, residues 1 to 11 (MKHLHRFFSSD) are cytoplasmic. Residues 12–31 (ASGGIILIIAAVLAMIMANS) form a helical membrane-spanning segment. At 32–58 (GATSGWYHDFLETPVQLRVGTLEINKN) the chain is on the periplasmic side. Residues 59 to 80 (MLLWINDALMAVFFLLVGLEVK) form a helical membrane-spanning segment. The Cytoplasmic segment spans residues 81 to 96 (RELMQGSLASLRQAAF). A helical membrane pass occupies residues 97–116 (PVIAAIGGMIVPALLYLAFN). Over 117–122 (YADPIT) the chain is Periplasmic. Residues 123–130 (REGWAIPA) form a helical membrane-spanning segment. At 131-154 (ATDIAFALGVLALLGSRVPLALKI) the chain is on the cytoplasmic side. A helical membrane pass occupies residues 155 to 176 (FLMALAIIDDLGAIIIIALFYT). Over 177-180 (NDLS) the chain is Periplasmic. A helical transmembrane segment spans residues 181-200 (MASLGVAAVAIAVLVVLNLC). Residues 201–204 (GVRR) are Cytoplasmic-facing. A helical membrane pass occupies residues 205–222 (TGVYILVGVVLWTAVLKS). Residue Gly-223 is a topological domain, periplasmic. Residues 224–236 (VHATLAGVIVGFF) form a helical membrane-spanning segment. At 237–253 (IPLKEKHGRSPAKRLEH) the chain is on the cytoplasmic side. The helical transmembrane segment at 254-272 (VLHPWVAYLILPLFAFANA) threads the bilayer. Over 273–286 (GVSLQGVTLEGLTS) the chain is Periplasmic. The helical transmembrane segment at 287–310 (ILPLGIIAGLLIGKPLGISLFCWL) threads the bilayer. Topologically, residues 311-339 (ALRLKLAHLPEGTTYQQIMAVGILCGIGF) are cytoplasmic. The helical transmembrane segment at 340–350 (TMSIFIASLAF) threads the bilayer. Topologically, residues 351–357 (GSVDPEL) are periplasmic. A helical membrane pass occupies residues 358–380 (INWAKLGILVGSISSAVIGYSWL). Residues 381–388 (RVRLRPSV) lie on the Cytoplasmic side of the membrane.

It belongs to the NhaA Na(+)/H(+) (TC 2.A.33) antiporter family.

Its subcellular location is the cell inner membrane. It catalyses the reaction Na(+)(in) + 2 H(+)(out) = Na(+)(out) + 2 H(+)(in). Na(+)/H(+) antiporter that extrudes sodium in exchange for external protons. This is Na(+)/H(+) antiporter NhaA from Escherichia coli O1:K1 / APEC.